The primary structure comprises 1635 residues: U3 small nucleolar RNA-associated protein 10 (1635 aa).

The interval 781–803 is disordered; that stretch reads TTSMDAPSDESTKRRRRSSSSTV. The next 2 helical transmembrane spans lie at 1141-1161 and 1288-1308; these read PELLNVILSLLPLPLFVTVAG and IALSVLALFATFIKRLPSFMV.

This sequence belongs to the HEATR1/UTP10 family. As to quaternary structure, component of the ribosomal small subunit (SSU) processome.

It localises to the nucleus. It is found in the nucleolus. The protein localises to the membrane. Involved in nucleolar processing of pre-18S ribosomal RNA. Involved in ribosome biosynthesis. The protein is U3 small nucleolar RNA-associated protein 10 of Yarrowia lipolytica (strain CLIB 122 / E 150) (Yeast).